Reading from the N-terminus, the 261-residue chain is Expansin-B2 (261 aa).

The first 24 residues, 1–24, serve as a signal peptide directing secretion; sequence MAGASAKVVAMLLSVLATYGFAAG. In terms of domain architecture, Expansin-like EG45 spans 51–157; that stretch reads GGACGFKNTN…RRVPCYHRGL (107 aa). 3 cysteine pairs are disulfide-bonded: Cys54/Cys82, Cys85/Cys152, and Cys90/Cys96. The Expansin-like CBD domain maps to 170 to 256; it reads VYLAVLVEFA…NWRANTNYGS (87 aa).

The protein belongs to the expansin family. Expansin B subfamily. As to expression, expressed in roots.

It is found in the secreted. Its subcellular location is the cell wall. The protein resides in the membrane. In terms of biological role, may cause loosening and extension of plant cell walls by disrupting non-covalent bonding between cellulose microfibrils and matrix glucans. No enzymatic activity has been found. May be required for rapid internodal elongation in deepwater rice during submergence. The polypeptide is Expansin-B2 (EXPB2) (Oryza sativa subsp. japonica (Rice)).